The following is a 249-amino-acid chain: MIT domain-containing protein 1 (249 aa).

An MIT domain is found at 8-86 (QDSDSTAAVA…KYLDQEKEDG (79 aa)). An important for association with membranes region spans residues 168–231 (SGLEEIKQSL…SLGYYDLDLR (64 aa)).

In terms of assembly, homodimer. Interacts (via MIT domain) with CHMP1A, CHMP1B, CHMP2A and IST1.

It localises to the late endosome membrane. Its subcellular location is the midbody. The protein localises to the membrane. Its function is as follows. Required for efficient abscission at the end of cytokinesis, together with components of the ESCRT-III complex. This is MIT domain-containing protein 1 (Mitd1) from Mus musculus (Mouse).